A 499-amino-acid polypeptide reads, in one-letter code: Probable aspartyl protease At4g16563 (499 aa).

The signal sequence occupies residues 1-26 (MKTCLIFFLYTTILQYYFHFSVSSLS). Positions 83-487 (YLISLSVGSS…DLLNRRVGFA (405 aa)) constitute a Peptidase A1 domain. Aspartate 101 is an active-site residue. Cysteine 111 and cysteine 119 are oxidised to a cystine. Asparagine 175 and asparagine 211 each carry an N-linked (GlcNAc...) asparagine glycan. Aspartate 353 is a catalytic residue. A disulfide bridge links cysteine 396 with cysteine 445. Residues asparagine 400 and asparagine 415 are each glycosylated (N-linked (GlcNAc...) asparagine).

Belongs to the peptidase A1 family.

The polypeptide is Probable aspartyl protease At4g16563 (Arabidopsis thaliana (Mouse-ear cress)).